Here is a 209-residue protein sequence, read N- to C-terminus: Thymidine kinase (209 aa).

ATP is bound by residues 9–16 (SAMNAGKT) and 88–91 (DEAQ). The active-site Proton acceptor is the E89.

The protein belongs to the thymidine kinase family. In terms of assembly, homotetramer.

The protein localises to the cytoplasm. It carries out the reaction thymidine + ATP = dTMP + ADP + H(+). In Xanthomonas axonopodis pv. citri (strain 306), this protein is Thymidine kinase.